Here is a 311-residue protein sequence, read N- to C-terminus: GPN-loop GTPase 2 (311 aa).

20–25 (GSGKTT) is a GTP binding site. A Gly-Pro-Asn (GPN)-loop; involved in dimer interface motif is present at residues 77–79 (GPN). Position 179–182 (179–182 (SKMD)) interacts with GTP.

Belongs to the GPN-loop GTPase family. Heterodimers with gpn1 or gpn3. Binds to RNA polymerase II (RNAPII).

Small GTPase required for proper localization of RNA polymerase II and III (RNAPII and RNAPIII). May act at an RNAP assembly step prior to nuclear import. In Danio rerio (Zebrafish), this protein is GPN-loop GTPase 2.